A 1250-amino-acid polypeptide reads, in one-letter code: Cell adhesion molecule-related/down-regulated by oncogenes (1250 aa).

The N-terminal stretch at 1 to 24 (MHPDLGPLWTLLYVLVILCSSVSS) is a signal peptide. Residues 25–962 (DLAPYFISEP…SPARSSDMLY (938 aa)) are Extracellular-facing. Ig-like C2-type domains are found at residues 28–113 (PYFI…ATVS), 119–203 (DFDS…LKVE), 224–302 (PALS…KHVT), 309–395 (EHAS…GRLQ), and 404–515 (PVIV…AFLT). A disulfide bridge connects residues Cys-49 and Cys-96. N-linked (GlcNAc...) asparagine glycosylation is found at Asn-99, Asn-179, Asn-286, Asn-293, Asn-341, and Asn-426. 2 cysteine pairs are disulfide-bonded: Cys-140–Cys-190 and Cys-242–Cys-289. Disulfide bonds link Cys-332-Cys-379 and Cys-425-Cys-499. The span at 524–534 (KAESVTPSEAS) shows a compositional bias: polar residues. Residues 524-547 (KAESVTPSEASQNDERDPQDGSES) form a disordered region. Asn-569 carries an N-linked (GlcNAc...) asparagine glycan. 3 Fibronectin type-III domains span residues 572 to 673 (VPDA…SKEK), 719 to 814 (APDR…VAGF), and 822 to 922 (PITG…TKVK). Residue Asn-869 is glycosylated (N-linked (GlcNAc...) asparagine). Residues 929-951 (DYPVKELSTPPSSSGNAGNVGPA) form a disordered region. Residues 963–983 (LIVGCVLGVMVLILMVFIALC) traverse the membrane as a helical segment. Topologically, residues 984–1250 (LWKSRQQSTI…SVVLQQAQET (267 aa)) are cytoplasmic. Disordered stretches follow at residues 1178 to 1208 (DNISDINSDSTEDTAEFSRGDSSGHSEAEDK) and 1223 to 1250 (DCGEKTARSPPGPPLDGLSVVLQQAQET). A compositionally biased stretch (basic and acidic residues) spans 1193-1208 (EFSRGDSSGHSEAEDK).

Part of a complex that contains BOC, CDON, NEO1, cadherins and CTNNB1. Interacts with NTN3. Interacts with DHH, IHH and SHH. N-glycosylated. Highly expressed in somites and the dorsal lips of the neural tube during embryogenesis. Detected at very low levels in adult tissues.

It is found in the cell membrane. Its function is as follows. Component of a cell-surface receptor complex that mediates cell-cell interactions between muscle precursor cells. Promotes differentiation of myogenic cells. Required for response to NTN3 and activation of NFATC3. The sequence is that of Cell adhesion molecule-related/down-regulated by oncogenes (Cdon) from Mus musculus (Mouse).